The following is a 282-amino-acid chain: NH(3)-dependent NAD(+) synthetase (282 aa).

51-58 is a binding site for ATP; sequence GISGGVDS. Asp57 lines the Mg(2+) pocket. Arg148 is a deamido-NAD(+) binding site. Thr168 serves as a coordination point for ATP. A Mg(2+)-binding site is contributed by Glu173. Lys181 and Asp188 together coordinate deamido-NAD(+). Residues Lys197 and Thr219 each coordinate ATP. 268–269 contacts deamido-NAD(+); that stretch reads HK.

This sequence belongs to the NAD synthetase family. Homodimer.

The enzyme catalyses deamido-NAD(+) + NH4(+) + ATP = AMP + diphosphate + NAD(+) + H(+). The protein operates within cofactor biosynthesis; NAD(+) biosynthesis; NAD(+) from deamido-NAD(+) (ammonia route): step 1/1. Its function is as follows. Catalyzes the ATP-dependent amidation of deamido-NAD to form NAD. Uses ammonia as a nitrogen source. This chain is NH(3)-dependent NAD(+) synthetase, found in Burkholderia ambifaria (strain MC40-6).